We begin with the raw amino-acid sequence, 99 residues long: Ubiquitin-related modifier 1 (99 aa).

Glycine 99 bears the 1-thioglycine mark. Glycine 99 is covalently cross-linked (Glycyl lysine isopeptide (Gly-Lys) (interchain with K-? in acceptor proteins)).

The protein belongs to the URM1 family. C-terminal thiocarboxylation occurs in 2 steps, it is first acyl-adenylated (-COAMP) via the hesA/moeB/thiF part of UBA4, then thiocarboxylated (-COSH) via the rhodanese domain of UBA4.

The protein localises to the cytoplasm. The protein operates within tRNA modification; 5-methoxycarbonylmethyl-2-thiouridine-tRNA biosynthesis. In terms of biological role, acts as a sulfur carrier required for 2-thiolation of mcm(5)S(2)U at tRNA wobble positions of cytosolic tRNA(Lys), tRNA(Glu) and tRNA(Gln). Serves as sulfur donor in tRNA 2-thiolation reaction by being thiocarboxylated (-COSH) at its C-terminus by the MOCS3 homolog UBA4. The sulfur is then transferred to tRNA to form 2-thiolation of mcm(5)S(2)U. Prior mcm(5) tRNA modification by the elongator complex is required for 2-thiolation. Also acts as a ubiquitin-like protein (UBL) that is covalently conjugated via an isopeptide bond to lysine residues of target proteins such as AHP1. The thiocarboxylated form serves as substrate for conjugation and oxidative stress specifically induces the formation of UBL-protein conjugates. This is Ubiquitin-related modifier 1 from Yarrowia lipolytica (strain CLIB 122 / E 150) (Yeast).